Consider the following 299-residue polypeptide: 4-diphosphocytidyl-2-C-methyl-D-erythritol kinase (299 aa).

The active site involves K11. Residue 94–104 (PQGGGLGGGSS) participates in ATP binding. The active site involves D136.

Belongs to the GHMP kinase family. IspE subfamily.

It carries out the reaction 4-CDP-2-C-methyl-D-erythritol + ATP = 4-CDP-2-C-methyl-D-erythritol 2-phosphate + ADP + H(+). Its pathway is isoprenoid biosynthesis; isopentenyl diphosphate biosynthesis via DXP pathway; isopentenyl diphosphate from 1-deoxy-D-xylulose 5-phosphate: step 3/6. In terms of biological role, catalyzes the phosphorylation of the position 2 hydroxy group of 4-diphosphocytidyl-2C-methyl-D-erythritol. The protein is 4-diphosphocytidyl-2-C-methyl-D-erythritol kinase of Bordetella pertussis (strain Tohama I / ATCC BAA-589 / NCTC 13251).